The sequence spans 367 residues: Leucine-rich repeat-containing protein 28 (367 aa).

LRR repeat units follow at residues 16–36 (KHKN…ELLK), 42–63 (YLER…LAQK), 66–87 (NLVE…IGSL), 89–110 (KLQC…IGRL), 112–133 (ALRH…VGDL), 135–156 (ELQT…LHMC), 158–180 (SLQY…CQLP), 181–202 (SLNE…LGRS), and 204–226 (ELQY…LYNK).

The sequence is that of Leucine-rich repeat-containing protein 28 (LRRC28) from Homo sapiens (Human).